The primary structure comprises 212 residues: Protein GET1 (212 aa).

At 1 to 4 the chain is on the lumenal side; it reads MASL. Residues 5–24 traverse the membrane as a helical segment; the sequence is LLFVLVIQIITYLINTIGAR. Over 25 to 110 the chain is Cytoplasmic; it reads TIDSLLWLLY…SFDWTIKTVR (86 aa). Residues 75 to 99 are a coiled coil; sequence AKLRRRHDKAMEEYDVKNKKLSALK. Residues 111-131 traverse the membrane as a helical segment; that stretch reads WVSTTGVTVILQFWFSKSPIF. The Lumenal segment spans residues 132–155; the sequence is DLPRGWLPWQVEWILSFPRAPLGT. Residues 156–172 traverse the membrane as a helical segment; the sequence is VSIQVWGGACGTVIALV. Residues 173–212 are Cytoplasmic-facing; sequence GGAMGVAAPAFKKINQPRGEAQKMGTPRGSREQTPVRKTQ. A disordered region spans residues 189 to 212; sequence PRGEAQKMGTPRGSREQTPVRKTQ. Basic and acidic residues predominate over residues 201–212; that stretch reads GSREQTPVRKTQ.

The protein belongs to the WRB/GET1 family. In terms of assembly, interacts with GET3.

It localises to the endoplasmic reticulum membrane. Its function is as follows. Required for the post-translational delivery of tail-anchored (TA) proteins to the endoplasmic reticulum. Acts as a membrane receptor for soluble GET3, which recognizes and selectively binds the transmembrane domain of TA proteins in the cytosol. This is Protein GET1 from Arthroderma otae (strain ATCC MYA-4605 / CBS 113480) (Microsporum canis).